The following is a 104-amino-acid chain: UPF0145 protein cbdbA1711 (104 aa).

This sequence belongs to the UPF0145 family.

This chain is UPF0145 protein cbdbA1711, found in Dehalococcoides mccartyi (strain CBDB1).